The chain runs to 100 residues: Urease subunit gamma (100 aa).

Belongs to the urease gamma subunit family. Heterotrimer of UreA (gamma), UreB (beta) and UreC (alpha) subunits. Three heterotrimers associate to form the active enzyme.

The protein resides in the cytoplasm. The catalysed reaction is urea + 2 H2O + H(+) = hydrogencarbonate + 2 NH4(+). It functions in the pathway nitrogen metabolism; urea degradation; CO(2) and NH(3) from urea (urease route): step 1/1. The sequence is that of Urease subunit gamma from Prochlorococcus marinus (strain NATL2A).